The following is a 287-amino-acid chain: uncharacterized protein (287 aa).

2 helical membrane passes run Ile-12–Leu-32 and Tyr-217–Val-237.

Its subcellular location is the cell membrane. This is an uncharacterized protein from Mycoplasma pneumoniae (strain ATCC 29342 / M129 / Subtype 1) (Mycoplasmoides pneumoniae).